Consider the following 646-residue polypeptide: Long-chain fatty acid transport protein 1 (646 aa).

Over 1 to 13 (MRAPGAGTASVAS) the chain is Extracellular. A helical membrane pass occupies residues 14–34 (LALLWFLGLPWTWSAAAAFCV). Residues 35 to 646 (YVGGGGWRFL…ARICAGDFSL (612 aa)) are Cytoplasmic-facing. Residues 191-475 (EVSEQLGKSL…YVSDSATNKK (285 aa)) form a sufficient for oligomerization region. Residue 246–257 (YIYTSGTTGLPK) coordinates AMP.

This sequence belongs to the ATP-dependent AMP-binding enzyme family. Self-associates. May function as a homodimer. Interacts with EPRS1; mediates the translocation of SLC27A1 from the cytoplasm to the plasma membrane thereby increasing the uptake of long-chain fatty acids. Interacts with DGAT2 and this interaction is enhanced in the presence of ZFYVE1. As to expression, higher expression in white adipose tissue than in heart. Highest expression in skeletal muscle, heart and fat. Lower levels in brain, kidney, lung, liver and testis. No expression in spleen or intestine.

It localises to the cell membrane. It is found in the mitochondrion outer membrane. Its subcellular location is the endomembrane system. The protein resides in the cytoplasm. The enzyme catalyses a fatty acid(in) = a fatty acid(out). It carries out the reaction (9Z)-octadecenoate(out) = (9Z)-octadecenoate(in). The catalysed reaction is hexadecanoate(out) = hexadecanoate(in). It catalyses the reaction (5Z,8Z,11Z,14Z)-eicosatetraenoate(out) = (5Z,8Z,11Z,14Z)-eicosatetraenoate(in). The enzyme catalyses (9Z,12Z)-octadecadienoate(out) = (9Z,12Z)-octadecadienoate(in). It carries out the reaction a long-chain fatty acid + ATP + CoA = a long-chain fatty acyl-CoA + AMP + diphosphate. The catalysed reaction is (5Z,8Z,11Z,14Z)-eicosatetraenoate + ATP + CoA = (5Z,8Z,11Z,14Z)-eicosatetraenoyl-CoA + AMP + diphosphate. It catalyses the reaction a very long-chain fatty acid + ATP + CoA = a very long-chain fatty acyl-CoA + AMP + diphosphate. The enzyme catalyses tetracosanoate + ATP + CoA = tetracosanoyl-CoA + AMP + diphosphate. Inhibited by Triacsin C. Both insulin and muscle contraction stimulate translocation to the plasma membrane in muscle, increasing fatty acid transport activity. Functionally, mediates the import of long-chain fatty acids (LCFA) into the cell by facilitating their transport at the plasma membrane. Also functions as an acyl-CoA ligase catalyzing the ATP-dependent formation of fatty acyl-CoA using LCFA and very-long-chain fatty acids (VLCFA) as substrates, which prevents fatty acid efflux from cells and might drive more fatty acid uptake. May act directly as a bona fide transporter, or alternatively, in a cytoplasmic or membrane-associated multimeric protein complex to trap and draw fatty acids towards accumulation. Plays a pivotal role in regulating available LCFA substrates from exogenous sources in tissues undergoing high levels of beta-oxidation or triglyceride synthesis. May be involved in regulation of cholesterol metabolism. Probably involved in fatty acid transport across the blood barrier. The sequence is that of Long-chain fatty acid transport protein 1 from Mus musculus (Mouse).